Consider the following 266-residue polypeptide: Undecaprenyl-diphosphatase (266 aa).

8 helical membrane-spanning segments follow: residues 2–22 (INIL…FLPI), 39–59 (LPII…IIYY), 86–106 (LKLI…GTFI), 112–132 (MFIL…ILML), 145–165 (ILLV…PGIS), 184–204 (AFEI…LFKY), 212–232 (MVLN…VGII), and 246–266 (LYYF…FFRI).

This sequence belongs to the UppP family.

The protein resides in the cell inner membrane. The catalysed reaction is di-trans,octa-cis-undecaprenyl diphosphate + H2O = di-trans,octa-cis-undecaprenyl phosphate + phosphate + H(+). Its function is as follows. Catalyzes the dephosphorylation of undecaprenyl diphosphate (UPP). Confers resistance to bacitracin. This Borrelia garinii subsp. bavariensis (strain ATCC BAA-2496 / DSM 23469 / PBi) (Borreliella bavariensis) protein is Undecaprenyl-diphosphatase.